Reading from the N-terminus, the 181-residue chain is UPF0302 protein LMOf2365_1950 (181 aa).

It belongs to the UPF0302 family.

This is UPF0302 protein LMOf2365_1950 from Listeria monocytogenes serotype 4b (strain F2365).